A 216-amino-acid polypeptide reads, in one-letter code: Cytochrome c biogenesis ATP-binding export protein CcmA (216 aa).

In terms of domain architecture, ABC transporter spans 11 to 216 (VSASKLTCIR…RKIRLDYRFV (206 aa)). 43-50 (GPNGAGKT) is a binding site for ATP.

It belongs to the ABC transporter superfamily. CcmA exporter (TC 3.A.1.107) family. The complex is composed of two ATP-binding proteins (CcmA) and two transmembrane proteins (CcmB).

The protein resides in the cell inner membrane. It carries out the reaction heme b(in) + ATP + H2O = heme b(out) + ADP + phosphate + H(+). In terms of biological role, part of the ABC transporter complex CcmAB involved in the biogenesis of c-type cytochromes; once thought to export heme, this seems not to be the case, but its exact role is uncertain. Responsible for energy coupling to the transport system. The protein is Cytochrome c biogenesis ATP-binding export protein CcmA of Shewanella sp. (strain MR-7).